The primary structure comprises 390 residues: cAMP-dependent protein kinase regulatory subunit (390 aa).

The span at 1 to 17 (MSASGFTSPFGANSNPF) shows a compositional bias: polar residues. The disordered stretch occupies residues 1–81 (MSASGFTSPF…RPQNPDGYPA (81 aa)). Residues 1–129 (MSASGFTSPF…RLKKAIQGNF (129 aa)) are dimerization and phosphorylation. Phosphoserine is present on serine 90. 3',5'-cyclic AMP contacts are provided by residues 130-261 (LFSH…EEVP), glutamate 208, arginine 217, 262-383 (ILST…GVEE), glutamate 329, and arginine 338.

This sequence belongs to the cAMP-dependent kinase regulatory chain family. Tetramer, composed of 2 regulatory (R) and 2 catalytic (C) subunits. In the presence of cAMP it dissociates into 2 active monomeric C subunits and an R dimer.

This Pyricularia oryzae (strain 70-15 / ATCC MYA-4617 / FGSC 8958) (Rice blast fungus) protein is cAMP-dependent protein kinase regulatory subunit (SUM1).